The sequence spans 387 residues: 3-dehydroquinate synthase (387 aa).

The protein belongs to the archaeal-type DHQ synthase family.

The enzyme catalyses 2-amino-2,3,7-trideoxy-D-lyxo-hept-6-ulosonate + NAD(+) + H2O = 3-dehydroquinate + NH4(+) + NADH + H(+). Catalyzes the oxidative deamination and cyclization of 2-amino-3,7-dideoxy-D-threo-hept-6-ulosonic acid (ADH) to yield 3-dehydroquinate (DHQ), which is fed into the canonical shikimic pathway of aromatic amino acid biosynthesis. This chain is 3-dehydroquinate synthase, found in Halobacterium salinarum (strain ATCC 29341 / DSM 671 / R1).